We begin with the raw amino-acid sequence, 444 residues long: Tol-Pal system protein TolB (444 aa).

Positions 1-26 are cleaved as a signal peptide; it reads MTLFRTLAPMGLALALLLPAAVPAAA. A compositionally biased stretch (polar residues) spans 281–310; that stretch reads IYTLDTGSGTRRQLTNSPSIETAPSYSPDG. Residues 281 to 311 are disordered; it reads IYTLDTGSGTRRQLTNSPSIETAPSYSPDGS.

It belongs to the TolB family. In terms of assembly, the Tol-Pal system is composed of five core proteins: the inner membrane proteins TolA, TolQ and TolR, the periplasmic protein TolB and the outer membrane protein Pal. They form a network linking the inner and outer membranes and the peptidoglycan layer.

The protein localises to the periplasm. In terms of biological role, part of the Tol-Pal system, which plays a role in outer membrane invagination during cell division and is important for maintaining outer membrane integrity. In Cereibacter sphaeroides (strain ATCC 17029 / ATH 2.4.9) (Rhodobacter sphaeroides), this protein is Tol-Pal system protein TolB.